Consider the following 302-residue polypeptide: Glutaminase (302 aa).

Residues Ser-61, Asn-111, Glu-155, Asn-162, Tyr-186, Tyr-238, and Val-256 each coordinate substrate.

This sequence belongs to the glutaminase family. Homotetramer.

The enzyme catalyses L-glutamine + H2O = L-glutamate + NH4(+). The polypeptide is Glutaminase (Pseudomonas paraeruginosa (strain DSM 24068 / PA7) (Pseudomonas aeruginosa (strain PA7))).